The primary structure comprises 919 residues: Rho guanine nucleotide exchange factor 1 (919 aa).

One can recognise an RGSL domain in the interval 39–230 (DQNSQFQSLE…SLYMRHLGVR (192 aa)). Residues 247-402 (VMGNRRSDEP…PPGWRELVPS (156 aa)) are disordered. Residues 281 to 310 (DCRHLKVEVDEKPGPADRKGSLGISSRDRT) show a composition bias toward basic and acidic residues. A compositionally biased stretch (acidic residues) spans 363-379 (STEDNGETESPEPGDDG). A Phosphoserine modification is found at Ser372. The DH domain maps to 414–603 (KRQEVISELL…REILHHVNQA (190 aa)). The region spanning 645–758 (KLVHEGPLTW…WCALITETAG (114 aa)) is the PH domain. Thr693 carries the post-translational modification Phosphothreonine. Tyr736 bears the Phosphotyrosine; by JAK2 mark. Disordered stretches follow at residues 761–800 (KVPAPASRPKPRPSPSSTREPLLSSSENGTGGTEAAPADA) and 839–865 (TEEDSGAGPPRDGDGVPGGGAPGPTHT). The span at 775 to 787 (PSSTREPLLSSSE) shows a compositional bias: low complexity. Residues 864–893 (HTQEVEENLLSLEVVIKQLEELEEEFCRLR) are a coiled coil. Ser904 carries the phosphoserine modification.

As to quaternary structure, interacts with RHOA, GNA12 and GNA13. Homooligomerizes through the coiled coil region. Interacts with CTNNAL1. May interact with CCPG1. Post-translationally, phosphorylated by PKCA. Angiotensin-2 induced Tyr-736 phosphorylation is mediated by JAK2.

The protein resides in the cytoplasm. Its subcellular location is the membrane. In terms of biological role, seems to play a role in the regulation of RhoA GTPase by guanine nucleotide-binding alpha-12 (GNA12) and alpha-13 (GNA13) subunits. Acts as a GTPase-activating protein (GAP) for GNA12 and GNA13, and as guanine nucleotide exchange factor (GEF) for RhoA GTPase. Activated G alpha 13/GNA13 stimulates the RhoGEF activity through interaction with the RGS-like domain. This GEF activity is inhibited by binding to activated GNA12. Mediates angiotensin-2-induced RhoA activation. In lymphoid follicles, may trigger activation of GNA13 as part of S1PR2-dependent signaling pathway that leads to inhibition of germinal center (GC) B cell growth and migration outside the GC niche. In Rattus norvegicus (Rat), this protein is Rho guanine nucleotide exchange factor 1 (Arhgef1).